The primary structure comprises 77 residues: MFANAIHLYFLFVNSQCLDTRLDRATTILESQHIISFTKLTKSNSPESESTLSFSLNNRSMSPYCLIAKSSSVINAE.

This is an uncharacterized protein from Vaccinia virus (strain Copenhagen) (VACV).